A 633-amino-acid polypeptide reads, in one-letter code: Hyphal wall protein 1 (633 aa).

The first 27 residues, 1-27 (MRLSTAQLIAIAYYMLSIGATVPQVDG), serve as a signal peptide directing secretion. 2 disordered regions span residues 40–306 (SYDY…TTTT) and 411–569 (CPLT…SGAI). Positions 42 to 114 (DYYQEPCDDY…DYPQQPQEPC (73 aa)) are enriched in low complexity. The stretch at 46-58 (EPCDDYPQQQQQQ) is one 1; approximate repeat. Positions 46 to 187 (EPCDDYPQQQ…PNIPTDWIPD (142 aa)) are 14 X 10 AA tandem repeats of [EVIQ]-P-[CDT]-D-[YNW]-P-[PQ]-[QI]-[QP]-[QDN]. One copy of the 2; approximate repeat lies at 59–69 (EPCDYPQQQQQ). The 3; approximate repeat unit spans residues 70 to 81 (EEPCDYPQQQPQ). 9 repeat units span residues 82–91 (EPCDYPQQPQ), 92–101 (EPCDYPQQPQ), 102–111 (EPCDYPQQPQ), 112–121 (EPCDNPPQPD), 122–131 (VPCDNPPQPD), 132–141 (VPCDNPPQPD), 142–151 (IPCDNPPQPD), 152–161 (IPCDNPPQPD), and 162–171 (QPDDNPPIPN). The segment covering 115–171 (DNPPQPDVPCDNPPQPDVPCDNPPQPDIPCDNPPQPDIPCDNPPQPDQPDDNPPIPN) has biased composition (pro residues). A 13; truncated repeat occupies 172 to 179 (IPTDWIPN). 2 stretches are compositionally biased toward low complexity: residues 172 to 183 (IPTDWIPNIPTD) and 193 to 306 (TTPA…TTTT). Residues 180-187 (IPTDWIPD) form a 14; truncated repeat. Asparagine 240 and asparagine 285 each carry an N-linked (GlcNAc...) asparagine glycan. A compositionally biased stretch (polar residues) spans 414–425 (TENTPGTDSTPE). The segment covering 507-549 (ETKPAAPKSSAPATEPSPVAPGTESAPAGPGASSSPKSSVLAS) has biased composition (low complexity). Residue asparagine 600 is glycosylated (N-linked (GlcNAc...) asparagine). Residue glycine 612 is the site of GPI-anchor amidated glycine attachment. Positions 613–633 (AGNNMRLTFGAAIIGIAAFLI) are cleaved as a propeptide — removed in mature form.

The protein belongs to the HWP1 family. In terms of processing, the GPI-anchor is attached to the protein in the endoplasmic reticulum and serves to target the protein to the cell surface. There, the glucosamine-inositol phospholipid moiety is cleaved off and the GPI-modified mannoprotein is covalently attached via its lipidless GPI glycan remnant to the 1,6-beta-glucan of the outer cell wall layer. N- and O-glycosylated.

The protein localises to the secreted. It is found in the cell wall. The protein resides in the membrane. Major hyphal cell wall protein which plays a role of adhesin and is required for mating, normal hyphal development, cell-to-cell adhesive functions necessary for biofilm integrity, attachment to host, and virulence. Promotes interactions with host and bacterial molecules, thus leading to effective colonization within polymicrobial communities. Plays a crucial role in gastrointestinal colonization, in mucosal symptomatic and asymptomatic infections, in vaginitis, as well as in lethal oroesophageal candidiasis, caused by the combined action of fungal virulence factors and host inflammatory responses when protective immunity is absent. The sequence is that of Hyphal wall protein 1 from Candida albicans (strain WO-1) (Yeast).